The chain runs to 797 residues: G-type lectin S-receptor-like serine/threonine-protein kinase SD2-2 (797 aa).

An N-terminal signal peptide occupies residues methionine 1–serine 23. One can recognise a Bulb-type lectin domain in the interval lysine 24–aspartate 139. Residues lysine 24–serine 401 are Extracellular-facing. 4 N-linked (GlcNAc...) asparagine glycosylation sites follow: asparagine 30, asparagine 49, asparagine 150, and asparagine 197. The 37-residue stretch at proline 274–alanine 310 folds into the EGF-like; atypical domain. 4 disulfides stabilise this stretch: cysteine 278–cysteine 290, cysteine 284–cysteine 298, cysteine 359–cysteine 381, and cysteine 363–cysteine 369. One can recognise a PAN domain in the interval cysteine 321–serine 407. N-linked (GlcNAc...) asparagine glycosylation is found at asparagine 366 and asparagine 397. The helical transmembrane segment at isoleucine 402–proline 422 threads the bilayer. Over leucine 423–proline 797 the chain is Cytoplasmic. The 282-residue stretch at asparagine 461–valine 742 folds into the Protein kinase domain. ATP contacts are provided by residues valine 467–valine 475 and lysine 490. Positions serine 550–threonine 566 are caM-binding. The active-site Proton acceptor is aspartate 585. Residues glycine 767–proline 797 form a disordered region. Residues serine 784–proline 797 show a composition bias toward low complexity.

This sequence belongs to the protein kinase superfamily. Ser/Thr protein kinase family. Post-translationally, autophosphorylated. Expressed in the shoot apex and roots, specifically in lateral roots and at the root-hypocotyl transition zone.

It is found in the cell membrane. The catalysed reaction is L-seryl-[protein] + ATP = O-phospho-L-seryl-[protein] + ADP + H(+). The enzyme catalyses L-threonyl-[protein] + ATP = O-phospho-L-threonyl-[protein] + ADP + H(+). Serine/threonine-protein kinase. This Arabidopsis thaliana (Mouse-ear cress) protein is G-type lectin S-receptor-like serine/threonine-protein kinase SD2-2 (SD22).